Consider the following 495-residue polypeptide: Glycerol kinase (495 aa).

Residue Thr11 participates in ADP binding. Thr11, Thr12, and Ser13 together coordinate ATP. Residue Thr11 participates in sn-glycerol 3-phosphate binding. Arg15 contributes to the ADP binding site. Sn-glycerol 3-phosphate is bound by residues Arg81, Glu82, Tyr133, and Asp242. The glycerol site is built by Arg81, Glu82, Tyr133, Asp242, and Gln243. The ADP site is built by Thr264 and Gly307. Positions 264, 307, 311, and 408 each coordinate ATP. An ADP-binding site is contributed by Gly408.

Belongs to the FGGY kinase family.

It carries out the reaction glycerol + ATP = sn-glycerol 3-phosphate + ADP + H(+). The protein operates within polyol metabolism; glycerol degradation via glycerol kinase pathway; sn-glycerol 3-phosphate from glycerol: step 1/1. With respect to regulation, inhibited by fructose 1,6-bisphosphate (FBP). In terms of biological role, key enzyme in the regulation of glycerol uptake and metabolism. Catalyzes the phosphorylation of glycerol to yield sn-glycerol 3-phosphate. The sequence is that of Glycerol kinase from Geobacter sp. (strain M21).